The following is a 209-amino-acid chain: ATP synthase subunit O, mitochondrial (209 aa).

It belongs to the ATPase delta chain family. As to quaternary structure, F-type ATPases have 2 components, CF(1) - the catalytic core - and CF(0) - the membrane proton channel. CF(1) has five subunits: alpha(3), beta(3), gamma(1), delta(1), epsilon(1). CF(0) has three main subunits: a, b and c.

It is found in the mitochondrion. It localises to the mitochondrion inner membrane. Its function is as follows. Mitochondrial membrane ATP synthase (F(1)F(0) ATP synthase or Complex V) produces ATP from ADP in the presence of a proton gradient across the membrane which is generated by electron transport complexes of the respiratory chain. F-type ATPases consist of two structural domains, F(1) - containing the extramembraneous catalytic core and F(0) - containing the membrane proton channel, linked together by a central stalk and a peripheral stalk. During catalysis, ATP synthesis in the catalytic domain of F(1) is coupled via a rotary mechanism of the central stalk subunits to proton translocation. Part of the complex F(0) domain and the peripheric stalk, which acts as a stator to hold the catalytic alpha(3)beta(3) subcomplex and subunit a/ATP6 static relative to the rotary elements. In Drosophila melanogaster (Fruit fly), this protein is ATP synthase subunit O, mitochondrial.